We begin with the raw amino-acid sequence, 234 residues long: LexA repressor (234 aa).

The segment at residues 41 to 61 is a DNA-binding region (H-T-H motif); the sequence is RAEIANELGFKSANAAEEHLQ. Residues Ser-152 and Lys-189 each act as for autocatalytic cleavage activity in the active site.

The protein belongs to the peptidase S24 family. Homodimer.

It carries out the reaction Hydrolysis of Ala-|-Gly bond in repressor LexA.. Functionally, represses a number of genes involved in the response to DNA damage (SOS response), including recA and lexA. In the presence of single-stranded DNA, RecA interacts with LexA causing an autocatalytic cleavage which disrupts the DNA-binding part of LexA, leading to derepression of the SOS regulon and eventually DNA repair. The protein is LexA repressor of Polaromonas sp. (strain JS666 / ATCC BAA-500).